The following is a 302-amino-acid chain: Sulfate adenylyltransferase subunit 2 (302 aa).

Residues R280–F302 are disordered.

The protein belongs to the PAPS reductase family. CysD subfamily. As to quaternary structure, heterodimer composed of CysD, the smaller subunit, and CysN.

It catalyses the reaction sulfate + ATP + H(+) = adenosine 5'-phosphosulfate + diphosphate. Its pathway is sulfur metabolism; hydrogen sulfide biosynthesis; sulfite from sulfate: step 1/3. With CysN forms the ATP sulfurylase (ATPS) that catalyzes the adenylation of sulfate producing adenosine 5'-phosphosulfate (APS) and diphosphate, the first enzymatic step in sulfur assimilation pathway. APS synthesis involves the formation of a high-energy phosphoric-sulfuric acid anhydride bond driven by GTP hydrolysis by CysN coupled to ATP hydrolysis by CysD. The sequence is that of Sulfate adenylyltransferase subunit 2 from Shewanella oneidensis (strain ATCC 700550 / JCM 31522 / CIP 106686 / LMG 19005 / NCIMB 14063 / MR-1).